Consider the following 328-residue polypeptide: D-cysteine desulfhydrase (328 aa).

At Lys51 the chain carries N6-(pyridoxal phosphate)lysine.

It belongs to the ACC deaminase/D-cysteine desulfhydrase family. As to quaternary structure, homodimer. Pyridoxal 5'-phosphate serves as cofactor.

The catalysed reaction is D-cysteine + H2O = hydrogen sulfide + pyruvate + NH4(+) + H(+). Functionally, catalyzes the alpha,beta-elimination reaction of D-cysteine and of several D-cysteine derivatives. It could be a defense mechanism against D-cysteine. The sequence is that of D-cysteine desulfhydrase from Escherichia coli O7:K1 (strain IAI39 / ExPEC).